Reading from the N-terminus, the 125-residue chain is Prefoldin subunit beta (125 aa).

It belongs to the prefoldin subunit beta family. Heterohexamer of two alpha and four beta subunits.

It localises to the cytoplasm. Molecular chaperone capable of stabilizing a range of proteins. Seems to fulfill an ATP-independent, HSP70-like function in archaeal de novo protein folding. This chain is Prefoldin subunit beta, found in Halobacterium salinarum (strain ATCC 29341 / DSM 671 / R1).